Here is a 167-residue protein sequence, read N- to C-terminus: Regulatory protein RecX (167 aa).

Positions 19–49 are disordered; sequence ESELRRKLASQPFSAKGHWGKQTGRSDNEPV.

It belongs to the RecX family.

It localises to the cytoplasm. Functionally, modulates RecA activity. This Yersinia enterocolitica serotype O:8 / biotype 1B (strain NCTC 13174 / 8081) protein is Regulatory protein RecX.